The following is a 260-amino-acid chain: Thiazole synthase (260 aa).

Catalysis depends on Lys-96, which acts as the Schiff-base intermediate with DXP. Residues Gly-157, 183-184, and 205-206 contribute to the 1-deoxy-D-xylulose 5-phosphate site; these read AG and AS.

It belongs to the ThiG family. Homotetramer. Forms heterodimers with either ThiH or ThiS.

It is found in the cytoplasm. The enzyme catalyses [ThiS sulfur-carrier protein]-C-terminal-Gly-aminoethanethioate + 2-iminoacetate + 1-deoxy-D-xylulose 5-phosphate = [ThiS sulfur-carrier protein]-C-terminal Gly-Gly + 2-[(2R,5Z)-2-carboxy-4-methylthiazol-5(2H)-ylidene]ethyl phosphate + 2 H2O + H(+). It functions in the pathway cofactor biosynthesis; thiamine diphosphate biosynthesis. Its function is as follows. Catalyzes the rearrangement of 1-deoxy-D-xylulose 5-phosphate (DXP) to produce the thiazole phosphate moiety of thiamine. Sulfur is provided by the thiocarboxylate moiety of the carrier protein ThiS. In vitro, sulfur can be provided by H(2)S. The sequence is that of Thiazole synthase from Corynebacterium glutamicum (strain R).